A 466-amino-acid polypeptide reads, in one-letter code: Vimentin (466 aa).

2 stretches are compositionally biased toward low complexity: residues 1-13 (MSTR…SYRR) and 20-33 (TSSR…YVTT). Residues 1–33 (MSTRSVSSSSYRRMFGGSGTSSRPSSNRSYVTT) form a disordered region. An N-acetylserine modification is found at serine 2. The tract at residues 2–95 (STRSVSSSSY…FSLADAINTE (94 aa)) is head. Serine 5 carries the post-translational modification Phosphoserine. Residue serine 7 is modified to Phosphoserine; by PKA and PKC; alternate. O-linked (GlcNAc) serine; alternate glycosylation occurs at serine 7. The residue at position 8 (serine 8) is a Phosphoserine. 2 positions are modified to phosphoserine; by PKC: serine 9 and serine 10. Threonine 20 bears the Phosphothreonine mark. Residues serine 25 and serine 26 each carry the phosphoserine modification. O-linked (GlcNAc) threonine glycosylation occurs at threonine 33. Serine 34 is a glycosylation site (O-linked (GlcNAc) serine; alternate). Serine 34 is subject to Phosphoserine; by PKC; alternate. Phosphoserine; by CaMK2, PKA, PKC and ROCK2 is present on serine 39. A Phosphoserine; by PKC modification is found at serine 42. Serine 47 carries the phosphoserine; by PKA modification. Serine 49 and serine 51 each carry phosphoserine. Phosphotyrosine is present on tyrosine 53. Serine 55 and serine 56 each carry phosphoserine. Position 61 is a phosphotyrosine (tyrosine 61). A Phosphoserine; by PKA and PKC modification is found at serine 66. A Phosphoserine; by AURKB and ROCK2 modification is found at serine 72. Residues serine 73, serine 83, and serine 87 each carry the phosphoserine modification. The tract at residues 96 to 131 (FKNTRTNEKVELQELNDRFANYIDKVRFLEQQNKIL) is coil 1A. The stretch at 96 to 131 (FKNTRTNEKVELQELNDRFANYIDKVRFLEQQNKIL) forms a coiled coil. Residues 103–411 (EKVELQELND…KLLEGEESRI (309 aa)) enclose the IF rod domain. A Glycyl lysine isopeptide (Lys-Gly) (interchain with G-Cter in SUMO2) cross-link involves residue lysine 104. Residue tyrosine 117 is modified to Phosphotyrosine. N6-acetyllysine; alternate is present on residues lysine 120, lysine 129, and lysine 139. Lysine 120 and lysine 129 each carry N6-succinyllysine; alternate. Glycyl lysine isopeptide (Lys-Gly) (interchain with G-Cter in SUMO2); alternate cross-links involve residues lysine 120, lysine 129, and lysine 139. Residues 132–153 (LAELEQLKGQGKSRLGDLYEEE) are linker 1. A Phosphoserine modification is found at serine 144. The stretch at 154–245 (MRELRRQVDQ…KLHDEEIQEL (92 aa)) forms a coiled coil. Residues 154-245 (MRELRRQVDQ…KLHDEEIQEL (92 aa)) form a coil 1B region. An N6-acetyllysine modification is found at lysine 168. Lysine 188 carries the post-translational modification N6-acetyllysine; alternate. The residue at position 188 (lysine 188) is an N6-succinyllysine; alternate. Residue serine 214 is modified to Phosphoserine. Lysine 223 carries the N6-acetyllysine; alternate modification. Residue lysine 223 forms a Glycyl lysine isopeptide (Lys-Gly) (interchain with G-Cter in SUMO2); alternate linkage. A Phosphoserine modification is found at serine 226. At lysine 235 the chain carries N6-acetyllysine. The segment at 246–268 (QAQIQEQHVQIDVDVSKPDLTAA) is linker 12. Lysine 262 is covalently cross-linked (Glycyl lysine isopeptide (Lys-Gly) (interchain with G-Cter in SUMO2)). The interval 269–407 (LRDVRQQYES…ATYRKLLEGE (139 aa)) is coil 2. Lysine 294 is subject to N6-acetyllysine; alternate. Position 294 is an N6-succinyllysine; alternate (lysine 294). Lysine 294 participates in a covalent cross-link: Glycyl lysine isopeptide (Lys-Gly) (interchain with G-Cter in SUMO2); alternate. Serine 299 carries the post-translational modification Phosphoserine. Residues 303 to 407 (NRNNDALRQA…ATYRKLLEGE (105 aa)) are a coiled coil. Lysine 313 participates in a covalent cross-link: Glycyl lysine isopeptide (Lys-Gly) (interchain with G-Cter in SUMO2). Serine 325 bears the Phosphoserine mark. Positions 326–329 (LTCE) match the [IL]-x-C-x-x-[DE] motif motif. Lysine 373 is modified (N6-acetyllysine; alternate). Residue lysine 373 forms a Glycyl lysine isopeptide (Lys-Gly) (interchain with G-Cter in SUMO2); alternate linkage. The tract at residues 408–466 (ESRISLPLPNFSSLNLRETNLESLPLVDTHSKRTLLIKTVETRDGQVINETSQHHDDLE) is tail. Serine 409, serine 412, serine 419, and serine 420 each carry phosphoserine. The residue at position 426 (threonine 426) is a Phosphothreonine. A Phosphoserine modification is found at serine 430. The residue at position 436 (threonine 436) is a Phosphothreonine. The residue at position 438 (serine 438) is a Phosphoserine. A Glycyl lysine isopeptide (Lys-Gly) (interchain with G-Cter in SUMO2) cross-link involves residue lysine 439. An N6-acetyllysine; alternate modification is found at lysine 445. Lysine 445 carries the N6-succinyllysine; alternate modification. A Glycyl lysine isopeptide (Lys-Gly) (interchain with G-Cter in SUMO2); alternate cross-link involves residue lysine 445. A Glycyl lysine isopeptide (Lys-Gly) (interchain with G-Cter in SUMO1); alternate cross-link involves residue lysine 445. 2 positions are modified to phosphothreonine: threonine 446 and threonine 458. The residue at position 459 (serine 459) is a Phosphoserine.

This sequence belongs to the intermediate filament family. Homomer assembled from elementary dimers. Identified in complexes that contain VIM, EZR, AHNAK, BFSP1, BFSP2, ANK2, PLEC, PRX and spectrin. Interacts with BCAS3. Interacts with LGSN. Interacts with SYNM. Interacts (via rod region) with PLEC (via CH 1 domain). Interacts with STK33. Interacts with LARP6. Interacts with RAB8B. Interacts with TOR1A; the interaction associates TOR1A with the cytoskeleton. Interacts with TOR1AIP1. Interacts with TOR1AIP1. Interacts with DIAPH1. Interacts with EPPK1; interaction is dependent of higher-order structure of intermediate filament. Interacts with the non-receptor tyrosine kinase SRMS; the interaction leads to phosphorylation of VIM. Interacts with NOD2. Interacts (via head region) with CORO1C. Interacts with HDGF. Interacts with PRKCE (via phorbol-ester/DAG-type 2 domain). Interacts with BFSP2. Interacts with PPL. Interacts with PKP1 and PKP2. Interacts with SCRIB (via PDZ domains); the interaction protects SCRIB from proteasomal degradation and facilitates SCRIB localization to intermediate filaments, the interaction is reduced by cell contact inhibition. Post-translationally, one of the most prominent phosphoproteins in various cells of mesenchymal origin. Phosphorylation is enhanced during cell division, at which time vimentin filaments are significantly reorganized. Phosphorylation by PKN1 inhibits the formation of filaments. Filament disassembly during mitosis is promoted by phosphorylation at Ser-55 as well as by nestin. Phosphorylated at Ser-56 by CDK5 during neutrophil secretion in the cytoplasm. Phosphorylated by STK33. Phosphorylated on tyrosine residues by SRMS. In terms of processing, S-nitrosylation is induced by interferon-gamma and oxidatively-modified low-densitity lipoprotein (LDL(ox)) possibly implicating the iNOS-S100A8/9 transnitrosylase complex.

It is found in the cytoplasm. The protein resides in the cytoskeleton. It localises to the nucleus matrix. Its subcellular location is the cell membrane. In terms of biological role, vimentins are class-III intermediate filaments found in various non-epithelial cells, especially mesenchymal cells. Vimentin is attached to the nucleus, endoplasmic reticulum, and mitochondria, either laterally or terminally. Plays a role in cell directional movement, orientation, cell sheet organization and Golgi complex polarization at the cell migration front. Protects SCRIB from proteasomal degradation and facilitates its localization to intermediate filaments in a cell contact-mediated manner. Functionally, involved with LARP6 in the stabilization of type I collagen mRNAs for CO1A1 and CO1A2. In Rattus norvegicus (Rat), this protein is Vimentin.